Consider the following 412-residue polypeptide: Aurora kinase (412 aa).

The segment at 94 to 119 is disordered; sequence NEKVRPSKSSHIPVKSPIRKKGHSPA. The region spanning 148–401 is the Protein kinase domain; sequence FEIGKVLGKG…LAEVMNHPWI (254 aa). Residues 154–162 and Lys177 each bind ATP; that span reads LGKGKLGKV. The active-site Proton acceptor is Asp271.

It belongs to the protein kinase superfamily. Ser/Thr protein kinase family. Aurora subfamily.

The protein localises to the nucleus. It is found in the cytoplasm. The protein resides in the cytoskeleton. It localises to the spindle. Its subcellular location is the chromosome. The protein localises to the centromere. It is found in the kinetochore. It catalyses the reaction L-seryl-[protein] + ATP = O-phospho-L-seryl-[protein] + ADP + H(+). The enzyme catalyses L-threonyl-[protein] + ATP = O-phospho-L-threonyl-[protein] + ADP + H(+). Its function is as follows. Component of the chromosomal passenger complex (CPC), a complex that acts as a key regulator of chromosome segregation and cytokinesis. Has a role in error-correction of aberrent kinetochore-microtubule attachments to ensure that sister kinetochores become bioriented and connect to opposite poles by promoting spindle assembly checkpoint signaling. The protein is Aurora kinase (IPL1) of Debaryomyces hansenii (strain ATCC 36239 / CBS 767 / BCRC 21394 / JCM 1990 / NBRC 0083 / IGC 2968) (Yeast).